A 516-amino-acid polypeptide reads, in one-letter code: Polyprenol-phosphate-mannose--protein mannosyltransferase (516 aa).

9 helical membrane-spanning segments follow: residues 113–133 (YNGL…VMLV), 143–163 (STLV…SFVS), 166–186 (TALL…CLMV), 234–254 (WSGL…DAIA), 275–295 (AAYV…APWF), 384–404 (VMLV…GWAL), 413–433 (WRYG…FADI), 437–457 (MYFF…ALIL), and 473–493 (LGLL…AWMY).

It belongs to the glycosyltransferase 39 family.

The protein localises to the cell membrane. It participates in protein modification; protein glycosylation. In terms of biological role, protein O-mannosyltransferase that catalyzes the transfer of a single mannose residue from a polyprenol phospho-mannosyl lipidic donor to the hydroxyl group of selected serine and threonine residues in acceptor proteins. The chain is Polyprenol-phosphate-mannose--protein mannosyltransferase from Mycolicibacterium smegmatis (strain ATCC 700084 / mc(2)155) (Mycobacterium smegmatis).